Here is a 338-residue protein sequence, read N- to C-terminus: Nicotinate-nucleotide--dimethylbenzimidazole phosphoribosyltransferase (338 aa).

Catalysis depends on E306, which acts as the Proton acceptor.

This sequence belongs to the CobT family.

The enzyme catalyses 5,6-dimethylbenzimidazole + nicotinate beta-D-ribonucleotide = alpha-ribazole 5'-phosphate + nicotinate + H(+). Its pathway is nucleoside biosynthesis; alpha-ribazole biosynthesis; alpha-ribazole from 5,6-dimethylbenzimidazole: step 1/2. Its function is as follows. Catalyzes the synthesis of alpha-ribazole-5'-phosphate from nicotinate mononucleotide (NAMN) and 5,6-dimethylbenzimidazole (DMB). The protein is Nicotinate-nucleotide--dimethylbenzimidazole phosphoribosyltransferase of Cereibacter sphaeroides (strain KD131 / KCTC 12085) (Rhodobacter sphaeroides).